The following is an 845-amino-acid chain: ATP-binding cassette sub-family F member 1 (845 aa).

The disordered stretch occupies residues 1–261 (MPKAPKQQPP…HLSKKEKKKL (261 aa)). 2 positions are modified to phosphoserine: serine 22 and serine 24. The segment covering 29–39 (KKGKKDKKIKK) has biased composition (basic residues). Residues 47–64 (VEDKQAGEEEKVLKEKEQ) show a composition bias toward basic and acidic residues. Residues 73 to 85 (QKKKRDTRKGRRK) are compositionally biased toward basic residues. Serine 105 is subject to Phosphoserine. Threonine 108 carries the post-translational modification Phosphothreonine. Residues serine 109 and serine 140 each carry the phosphoserine; by CK2 modification. Residues 147-160 (EKHPPKPAKPEKNR) show a composition bias toward basic and acidic residues. Serine 166 is modified (phosphoserine). Over residues 206-226 (EIIKEKEPPKQGKEKAKKAEQ) the composition is skewed to basic and acidic residues. Residues 227–241 (GSEEEGEGEEEEEEG) are compositionally biased toward acidic residues. Position 228 is a phosphoserine (serine 228). The ABC transporter 1 domain occupies 304–548 (IKLEKFSISA…MYQQKQKELL (245 aa)). 336–343 (GPNGKGKT) is a binding site for ATP. The segment covering 559–580 (KELKAGGKSTKQAEKQTKEALT) has biased composition (basic and acidic residues). The segment at 559-602 (KELKAGGKSTKQAEKQTKEALTRKQQKCRRKNQDEESQEAPELL) is disordered. Position 595 is a phosphoserine (serine 595). An ABC transporter 2 domain is found at 625–840 (LGLHGVTFGY…VLEALGEVMV (216 aa)). 658–665 (GPNGVGKS) contacts ATP.

It belongs to the ABC transporter superfamily. ABCF family. EF3 subfamily. Isoform 2 interacts (via N-terminus) with EIF2S1; the interaction is independent of its phosphorylated status. Isoform 2 associates (via both ABC transporter domains) with the ribosomes. Isoform 2 is phosphorylated at phosphoserine and phosphothreonine. Isoform 2 phosphorylation on Ser-109 and Ser-140 by CK2 inhibits association of EIF2 with ribosomes. As to expression, ubiquitous.

Its subcellular location is the cytoplasm. It is found in the nucleus. It localises to the nucleoplasm. The protein resides in the nucleus envelope. Functionally, isoform 2 is required for efficient Cap- and IRES-mediated mRNA translation initiation. Isoform 2 is not involved in the ribosome biogenesis. The polypeptide is ATP-binding cassette sub-family F member 1 (ABCF1) (Homo sapiens (Human)).